The chain runs to 1232 residues: Histone-lysine N-methyltransferase MECOM (1232 aa).

The segment at 22-68 is disordered; that stretch reads PEIPLEEMPDADADGITSVPSLHIQEPCSPATSSESFTPKEGSPYKA. The span at 25–34 shows a compositional bias: acidic residues; the sequence is PLEEMPDADA. Residues 80-192 form the SET domain; the sequence is DEFELRESTM…PGEELLLFMK (113 aa). Residues K101 and K192 each participate in a glycyl lysine isopeptide (Lys-Gly) (interchain with G-Cter in SUMO2) cross-link. An interaction with SUV39H1 and probably MAPK9 and SMAD3 region spans residues 191 to 442; the sequence is MKSEEDPHEP…NHFAAGGFFG (252 aa). 5 consecutive C2H2-type zinc fingers follow at residues 211–238, 265–287, 293–315, 321–344, and 350–372; these read HRCE…STPH, QDCK…MLSH, YKCD…QMSH, YECE…RSQH, and HACP…KHIH. A Glycyl lysine isopeptide (Lys-Gly) (interchain with G-Cter in SUMO2) cross-link involves residue K294. Residues K369 and K376 each participate in a glycyl lysine isopeptide (Lys-Gly) (interchain with G-Cter in SUMO2) cross-link. The segment at 378 to 400 adopts a C2H2-type 6 zinc-finger fold; sequence FICEVCHKSYTQFSNLCRHKRMH. A C2H2-type 7; atypical zinc finger spans residues 407-429; that stretch reads IKCKDCGQMFSTTSSLNKHRRFC. Residues K432, K525, K545, K549, and K557 each participate in a glycyl lysine isopeptide (Lys-Gly) (interchain with G-Cter in SUMO2) cross-link. The segment at 548–622 is disordered; sequence SKHPPVGDNK…KCKENGKMFK (75 aa). Over residues 562–577 the composition is skewed to basic and acidic residues; sequence LPERSSEERPLEKISD. The segment covering 588-600 has biased composition (polar residues); sequence STPSGSDLETTSG. Over residues 608–622 the composition is skewed to basic and acidic residues; sequence ESDKEKCKENGKMFK. The Nuclear localization signal signature appears at 611-624; that stretch reads KEKCKENGKMFKDK. K624 participates in a covalent cross-link: Glycyl lysine isopeptide (Lys-Gly) (interchain with G-Cter in SUMO2). Residue S626 is modified to Phosphoserine. Residues K637, K665, K687, and K723 each participate in a glycyl lysine isopeptide (Lys-Gly) (interchain with G-Cter in SUMO2) cross-link. The disordered stretch occupies residues 720-823; sequence LPLKMEPQSP…DGSLQHARPT (104 aa). S728 carries the phosphoserine modification. Residues K733, K734, and K737 each participate in a glycyl lysine isopeptide (Lys-Gly) (interchain with G-Cter in SUMO2) cross-link. A Phosphoserine modification is found at S742. A CTBP-binding motif 1 motif is present at residues 743–747; sequence PFDLT. Residues K751, K754, and K762 each participate in a glycyl lysine isopeptide (Lys-Gly) (interchain with G-Cter in SUMO2) cross-link. The span at 758–773 shows a compositional bias: polar residues; sequence SGPSKPSGTPATSQDQ. Positions 774–778 match the CTBP-binding motif 2 motif; sequence PLDLS. Residues K789, K802, and K803 each participate in a glycyl lysine isopeptide (Lys-Gly) (interchain with G-Cter in SUMO2) cross-link. Basic and acidic residues predominate over residues 791 to 805; that stretch reads TEPRKNHVFGEKKGS. Residues 806–816 show a composition bias toward polar residues; the sequence is NMDTRPSSDGS. Residues K837, K846, K848, and K879 each participate in a glycyl lysine isopeptide (Lys-Gly) (interchain with G-Cter in SUMO2) cross-link. 3 C2H2-type zinc fingers span residues 914–936, 942–965, and 971–993; these read YTCR…LRTH, YRCK…RNIH, and FKCH…LKKH. A Glycyl lysine isopeptide (Lys-Gly) (interchain with G-Cter in SUMO2) cross-link involves residue K1020. Positions 1032–1043 are enriched in polar residues; it reads IGNSNHGSQSPR. The interval 1032-1107 is disordered; it reads IGNSNHGSQS…GVTRLDEEIP (76 aa). Phosphoserine occurs at positions 1039 and 1041. Positions 1044-1059 are enriched in basic and acidic residues; the sequence is NMEERMNGSHFKDKKA. Residues K1055 and K1058 each participate in a glycyl lysine isopeptide (Lys-Gly) (interchain with G-Cter in SUMO2) cross-link. Residues 1068-1088 are compositionally biased toward acidic residues; it reads LLDDEEVEDEVLLDEEDEDND. Residues 1089-1104 show a composition bias toward basic and acidic residues; sequence IPGKPRKELGVTRLDE. Residues K1122, K1129, K1134, K1151, K1178, and K1186 each participate in a glycyl lysine isopeptide (Lys-Gly) (interchain with G-Cter in SUMO2) cross-link.

Homooligomer. Interacts with CTBP1. Interacts with SMAD3 (via MH2 domain); the interaction is direct. Interacts with SMAD4; through interaction with SMAD3. Interacts with CREBBP, KAT2B and histone deacetylases. Interacts with MAPK8 and MAPK9; inhibits JNK signaling. Interacts with SUV39H1 (via SET domain); enhances MECOM transcriptional repression activity. Post-translationally, may be acetylated by CREBBP and KAT2B.

Its subcellular location is the nucleus. The protein localises to the nucleus speckle. The protein resides in the cytoplasm. The catalysed reaction is L-lysyl(9)-[histone H3] + S-adenosyl-L-methionine = N(6)-methyl-L-lysyl(9)-[histone H3] + S-adenosyl-L-homocysteine + H(+). Functionally, functions as a transcriptional regulator binding to DNA sequences in the promoter region of target genes and regulating positively or negatively their expression. Oncogene which plays a role in development, cell proliferation and differentiation. May also play a role in apoptosis through regulation of the JNK and TGF-beta signaling. Involved in hematopoiesis. Its function is as follows. Displays histone methyltransferase activity and monomethylates 'Lys-9' of histone H3 (H3K9me1) in vitro. Probably catalyzes the monomethylation of free histone H3 in the cytoplasm which is then transported to the nucleus and incorporated into nucleosomes where SUV39H methyltransferases use it as a substrate to catalyze histone H3 'Lys-9' trimethylation. Likely to be one of the primary histone methyltransferases along with PRDM16 that direct cytoplasmic H3K9me1 methylation. This chain is Histone-lysine N-methyltransferase MECOM, found in Mus musculus (Mouse).